Consider the following 230-residue polypeptide: Aquaporin Z (230 aa).

2 helical membrane passes run 9 to 29 (AELIGTFWLVLGGCGSAVLAA) and 35 to 55 (IGVLGVAFAFGLTVLTMAFAI). An NPA 1 motif is present at residues 64–66 (NPA). A run of 3 helical transmembrane segments spans residues 83–103 (LPYVIAQVIGAILAAGVIYLI), 131–151 (LGAGFVSEVVMTAMFLVVIMG), and 160–180 (GFAPIAIGLALTLIHLISIPV). The NPA 2 signature appears at 186–188 (NPA). The chain crosses the membrane as a helical span at residues 194-214 (ALFVGGWALQQLWLFWVAPLI).

This sequence belongs to the MIP/aquaporin (TC 1.A.8) family. Homotetramer.

It localises to the cell inner membrane. It catalyses the reaction H2O(in) = H2O(out). Functionally, channel that permits osmotically driven movement of water in both directions. It is involved in the osmoregulation and in the maintenance of cell turgor during volume expansion in rapidly growing cells. It mediates rapid entry or exit of water in response to abrupt changes in osmolarity. The sequence is that of Aquaporin Z from Pseudomonas putida (strain ATCC 47054 / DSM 6125 / CFBP 8728 / NCIMB 11950 / KT2440).